The chain runs to 978 residues: Chitin synthase 3 (978 aa).

Positions 1-13 (MGFNPQGQGNGPN) are enriched in low complexity. 2 disordered regions span residues 1–95 (MGFN…FDGH) and 108–127 (GHYP…YEYP). N-linked (GlcNAc...) asparagine glycosylation occurs at N72. A glycan (N-linked (GlcNAc...) asparagine) is linked at N604. The next 7 helical transmembrane spans lie at 641–661 (LVNV…TTII), 686–706 (IVNV…FVLA), 719–739 (VLSF…TGYL), 775–795 (LIII…FLYL), 803–823 (SFPQ…VYAF), 908–928 (VILW…DDFI), and 946–966 (VLLY…LWFI).

This sequence belongs to the chitin synthase family. Class III subfamily.

It localises to the cell membrane. It carries out the reaction [(1-&gt;4)-N-acetyl-beta-D-glucosaminyl](n) + UDP-N-acetyl-alpha-D-glucosamine = [(1-&gt;4)-N-acetyl-beta-D-glucosaminyl](n+1) + UDP + H(+). Polymerizes chitin, a structural polymer of the cell wall and septum, by transferring the sugar moiety of UDP-GlcNAc to the non-reducing end of the growing chitin polymer. Is essential for viability. The sequence is that of Chitin synthase 3 from Fusarium oxysporum f. sp. lycopersici (strain 4287 / CBS 123668 / FGSC 9935 / NRRL 34936) (Fusarium vascular wilt of tomato).